We begin with the raw amino-acid sequence, 607 residues long: Pescadillo homolog (607 aa).

One can recognise a BRCT domain in the interval K320–I413. Residues E486–K607 form a disordered region. The span at E495 to E511 shows a compositional bias: acidic residues. Over residues I530 to R549 the composition is skewed to basic and acidic residues. Residues R551 to R562 are compositionally biased toward basic residues. A compositionally biased stretch (basic and acidic residues) spans K563–K607.

This sequence belongs to the pescadillo family.

Its subcellular location is the nucleus. The protein localises to the nucleolus. It is found in the nucleoplasm. In terms of biological role, required for maturation of ribosomal RNAs and formation of the large ribosomal subunit. This is Pescadillo homolog from Culex quinquefasciatus (Southern house mosquito).